A 187-amino-acid polypeptide reads, in one-letter code: Plasmodium-specific hydrophobic abundant protein (187 aa).

Residues 1-18 form the signal peptide; sequence MMKYVFVALCLFAVVALA.

This sequence to HAP-S protein.

Its subcellular location is the membrane. This chain is Plasmodium-specific hydrophobic abundant protein, found in Physarum polycephalum (Slime mold).